The chain runs to 298 residues: N-acetylmuramic acid 6-phosphate etherase (298 aa).

The region spanning 55-218 (IHAQVSGGGR…STGLMIKSGK (164 aa)) is the SIS domain. Glu83 serves as the catalytic Proton donor. Residue Glu114 is part of the active site.

This sequence belongs to the GCKR-like family. MurNAc-6-P etherase subfamily. Homodimer.

The enzyme catalyses N-acetyl-D-muramate 6-phosphate + H2O = N-acetyl-D-glucosamine 6-phosphate + (R)-lactate. It participates in amino-sugar metabolism; 1,6-anhydro-N-acetylmuramate degradation. The protein operates within amino-sugar metabolism; N-acetylmuramate degradation. Its pathway is cell wall biogenesis; peptidoglycan recycling. In terms of biological role, specifically catalyzes the cleavage of the D-lactyl ether substituent of MurNAc 6-phosphate, producing GlcNAc 6-phosphate and D-lactate. Together with AnmK, is also required for the utilization of anhydro-N-acetylmuramic acid (anhMurNAc) either imported from the medium or derived from its own cell wall murein, and thus plays a role in cell wall recycling. This Escherichia fergusonii (strain ATCC 35469 / DSM 13698 / CCUG 18766 / IAM 14443 / JCM 21226 / LMG 7866 / NBRC 102419 / NCTC 12128 / CDC 0568-73) protein is N-acetylmuramic acid 6-phosphate etherase.